The following is a 362-amino-acid chain: Peptide chain release factor 1 (362 aa).

Q237 carries the post-translational modification N5-methylglutamine. The segment covering 284–295 (EEEKRQAEETST) has biased composition (basic and acidic residues). The disordered stretch occupies residues 284–304 (EEEKRQAEETSTRRNLVASGD).

Belongs to the prokaryotic/mitochondrial release factor family. Post-translationally, methylated by PrmC. Methylation increases the termination efficiency of RF1.

Its subcellular location is the cytoplasm. Functionally, peptide chain release factor 1 directs the termination of translation in response to the peptide chain termination codons UAG and UAA. The protein is Peptide chain release factor 1 of Pseudoalteromonas atlantica (strain T6c / ATCC BAA-1087).